Here is a 228-residue protein sequence, read N- to C-terminus: Protein Thf1 (228 aa).

The stretch at 201 to 223 forms a coiled coil; sequence IKRSKEVVDELSQTERRKREERA. The segment at 209–228 is disordered; sequence DELSQTERRKREERAVSQPG.

This sequence belongs to the THF1 family.

May be involved in photosynthetic membrane biogenesis. The protein is Protein Thf1 of Gloeobacter violaceus (strain ATCC 29082 / PCC 7421).